Consider the following 95-residue polypeptide: Protein NCBP2AS2 homolog (95 aa).

In Ixodes scapularis (Black-legged tick), this protein is Protein NCBP2AS2 homolog.